A 509-amino-acid polypeptide reads, in one-letter code: Maturase K (509 aa).

The protein belongs to the intron maturase 2 family. MatK subfamily.

The protein localises to the plastid. The protein resides in the chloroplast. In terms of biological role, usually encoded in the trnK tRNA gene intron. Probably assists in splicing its own and other chloroplast group II introns. This Nicotiana clevelandii (Wild tobacco) protein is Maturase K.